A 125-amino-acid chain; its full sequence is MSNPQQLRYSKEHEWLSGAEDGVSTVGITEHAANALGDVVFVQLPEVGDSVTAGETCGELESTKSVSDLYSPVSGEITEVNEDVVNDPSLVNSAPFEGGWLFKVRITDEPADLLSADEYTAFAGA.

In terms of domain architecture, Lipoyl-binding spans 23–105 (VSTVGITEHA…FEGGWLFKVR (83 aa)). Lysine 64 carries the N6-lipoyllysine modification.

The protein belongs to the GcvH family. In terms of assembly, the glycine cleavage system is composed of four proteins: P, T, L and H. (R)-lipoate serves as cofactor.

In terms of biological role, the glycine cleavage system catalyzes the degradation of glycine. The H protein shuttles the methylamine group of glycine from the P protein to the T protein. This chain is Glycine cleavage system H protein, found in Streptomyces coelicolor (strain ATCC BAA-471 / A3(2) / M145).